A 660-amino-acid chain; its full sequence is Polyadenylate-binding protein 3 (660 aa).

4 consecutive RRM domains span residues 49 to 126 (SSLY…LSNR), 136 to 213 (GNIF…HFIR), 229 to 306 (TNVY…RAQK), and 332 to 409 (ANLY…LAQR). One can recognise a PABC domain in the interval 571–648 (PISKLTSSLA…ALDVLRLSVD (78 aa)).

The protein belongs to the polyadenylate-binding protein type-1 family. In terms of tissue distribution, expressed predominantly in immature flowers. Detected in tapetum and pollen. Strongly expressed in immatures siliques.

It localises to the cytoplasm. The protein resides in the nucleus. Functionally, binds the poly(A) tail of mRNA. Appears to be an important mediator of the multiple roles of the poly(A) tail in mRNA biogenesis, stability and translation. In the cytoplasm, affects both translation and mRNA decay. Inhibits the polyadenylated RNA degradation by the Rrp41p 3'--&gt;5' exonuclease in vitro. Binds with the 5'UTRs of PAB2, PAB3 and with a lower affinity with the 5'UTR of PAB5. The chain is Polyadenylate-binding protein 3 (PAB3) from Arabidopsis thaliana (Mouse-ear cress).